The sequence spans 72 residues: UPF0150 protein ssl0738 (72 aa).

The protein belongs to the UPF0150 family.

The chain is UPF0150 protein ssl0738 from Synechocystis sp. (strain ATCC 27184 / PCC 6803 / Kazusa).